Consider the following 1404-residue polypeptide: Probable GPI-anchored adhesin-like protein PGA55 (1404 aa).

A signal peptide spans Met1–Gly19. 87 repeat units span residues Val104–Ser109, Val136–Glu141, Val156–Lys161, Val162–Glu167, Val183–Gln188, Val196–Glu201, Val203–Glu208, Val209–Glu214, Val216–Glu221, Val222–Glu227, Val228–Glu233, Val234–Gln239, Val247–Glu252, Val253–Ser258, Val261–Glu266, Val267–Glu272, Val274–Glu279, Val280–Glu285, Val286–Glu291, Val292–Glu297, Val298–Glu303, Val304–Gln309, Val317–Glu322, Val324–Glu329, Val330–Glu335, Val336–Glu341, Val343–Glu348, Val349–Glu354, Val355–Glu360, Val361–Gln366, Val374–Glu379, Val380–Ser385, Val388–Glu393, Val394–Glu399, Val401–Glu406, Val407–Glu412, Val413–Glu418, Val419–Glu424, Val425–Glu430, Val431–Gln436, Val444–Glu449, Val450–Glu455, Val457–Glu462, Val463–Glu468, Val469–Glu474, Val475–Gln480, Val488–Glu493, Val494–Glu500, Val502–Glu507, Val508–Glu513, Val515–Glu520, Val521–Glu526, Val527–Glu532, Val533–Gln538, Val546–Glu551, Val552–Ser557, Val560–Glu565, Val566–Glu571, Val573–Glu578, Val579–Glu584, Val585–Glu590, Val591–Gln596, Val604–Glu609, Val611–Glu616, Val617–Glu622, Val623–Glu628, Val629–Glu634, Val635–Glu640, Val641–Gln646, Val654–Glu659, Val660–Ser665, Val668–Glu673, Val674–Glu679, Val681–Glu686, Val687–Glu692, Val693–Glu698, Val699–Gln704, Val712–Glu717, Val719–Glu724, Val725–Glu730, Val731–Glu736, Val737–Glu742, Val743–Glu748, Val749–Glu754, Val771–Glu776, Val777–Gln782, and Val797–Glu802. Residues Val104–Ser541 are 88 X 6 AA approximate tandem repeats. The tract at residues Ser113–Val833 is disordered. Asn817 is a glycosylation site (N-linked (GlcNAc...) asparagine). Residues Val824 to Ala829 form a 1-88 repeat. 2 N-linked (GlcNAc...) asparagine glycosylation sites follow: Asn994 and Asn1074. Residue Asn1382 is the site of GPI-anchor amidated asparagine attachment. The propeptide at Ala1383–Ala1404 is removed in mature form.

Its subcellular location is the cell membrane. Functionally, predicted GPI-anchored adhesin-like protein which may be involved in filamentous growth and chlamydospore formation. This Candida albicans (strain SC5314 / ATCC MYA-2876) (Yeast) protein is Probable GPI-anchored adhesin-like protein PGA55 (PGA55).